A 189-amino-acid polypeptide reads, in one-letter code: Recombination protein RecR (189 aa).

The C4-type zinc finger occupies 48-63 (CQTCFHLSAEPLCDIC). Residues 71–165 (QLLCVVADSR…QVSRIAYGLP (95 aa)) enclose the Toprim domain.

This sequence belongs to the RecR family.

Functionally, may play a role in DNA repair. It seems to be involved in an RecBC-independent recombinational process of DNA repair. It may act with RecF and RecO. The polypeptide is Recombination protein RecR (Prochlorococcus marinus (strain MIT 9313)).